Consider the following 201-residue polypeptide: Small ribosomal subunit protein uS4 (201 aa).

Positions 91–151 (SRLDNVVYRA…EKSQKMIWFE (61 aa)) constitute an S4 RNA-binding domain.

The protein belongs to the universal ribosomal protein uS4 family. As to quaternary structure, part of the 30S ribosomal subunit. Contacts protein S5. The interaction surface between S4 and S5 is involved in control of translational fidelity.

One of the primary rRNA binding proteins, it binds directly to 16S rRNA where it nucleates assembly of the body of the 30S subunit. Functionally, with S5 and S12 plays an important role in translational accuracy. The sequence is that of Small ribosomal subunit protein uS4 from Corynebacterium diphtheriae (strain ATCC 700971 / NCTC 13129 / Biotype gravis).